Here is a 380-residue protein sequence, read N- to C-terminus: Queuine tRNA-ribosyltransferase (380 aa).

The active-site Proton acceptor is the D96. Substrate is bound by residues 96–100 (DSGGF), D150, Q193, and G220. Residues 251–257 (GVGAPDS) are RNA binding. The active-site Nucleophile is D270. The RNA binding; important for wobble base 34 recognition stretch occupies residues 275–279 (TRIAR). The Zn(2+) site is built by C308, C310, C313, and H339.

The protein belongs to the queuine tRNA-ribosyltransferase family. As to quaternary structure, homodimer. Within each dimer, one monomer is responsible for RNA recognition and catalysis, while the other monomer binds to the replacement base PreQ1. Requires Zn(2+) as cofactor.

The catalysed reaction is 7-aminomethyl-7-carbaguanine + guanosine(34) in tRNA = 7-aminomethyl-7-carbaguanosine(34) in tRNA + guanine. Its pathway is tRNA modification; tRNA-queuosine biosynthesis. Functionally, catalyzes the base-exchange of a guanine (G) residue with the queuine precursor 7-aminomethyl-7-deazaguanine (PreQ1) at position 34 (anticodon wobble position) in tRNAs with GU(N) anticodons (tRNA-Asp, -Asn, -His and -Tyr). Catalysis occurs through a double-displacement mechanism. The nucleophile active site attacks the C1' of nucleotide 34 to detach the guanine base from the RNA, forming a covalent enzyme-RNA intermediate. The proton acceptor active site deprotonates the incoming PreQ1, allowing a nucleophilic attack on the C1' of the ribose to form the product. After dissociation, two additional enzymatic reactions on the tRNA convert PreQ1 to queuine (Q), resulting in the hypermodified nucleoside queuosine (7-(((4,5-cis-dihydroxy-2-cyclopenten-1-yl)amino)methyl)-7-deazaguanosine). The polypeptide is Queuine tRNA-ribosyltransferase (Streptococcus gordonii (strain Challis / ATCC 35105 / BCRC 15272 / CH1 / DL1 / V288)).